Here is a 616-residue protein sequence, read N- to C-terminus: Dihydroxy-acid dehydratase (616 aa).

A Mg(2+)-binding site is contributed by Asp81. Cys122 contacts [2Fe-2S] cluster. Mg(2+) contacts are provided by Asp123 and Lys124. Lys124 is modified (N6-carboxylysine). Cys195 serves as a coordination point for [2Fe-2S] cluster. Glu491 is a Mg(2+) binding site. Catalysis depends on Ser517, which acts as the Proton acceptor.

Belongs to the IlvD/Edd family. As to quaternary structure, homodimer. [2Fe-2S] cluster is required as a cofactor. Requires Mg(2+) as cofactor.

It catalyses the reaction (2R)-2,3-dihydroxy-3-methylbutanoate = 3-methyl-2-oxobutanoate + H2O. The catalysed reaction is (2R,3R)-2,3-dihydroxy-3-methylpentanoate = (S)-3-methyl-2-oxopentanoate + H2O. It functions in the pathway amino-acid biosynthesis; L-isoleucine biosynthesis; L-isoleucine from 2-oxobutanoate: step 3/4. The protein operates within amino-acid biosynthesis; L-valine biosynthesis; L-valine from pyruvate: step 3/4. Functions in the biosynthesis of branched-chain amino acids. Catalyzes the dehydration of (2R,3R)-2,3-dihydroxy-3-methylpentanoate (2,3-dihydroxy-3-methylvalerate) into 2-oxo-3-methylpentanoate (2-oxo-3-methylvalerate) and of (2R)-2,3-dihydroxy-3-methylbutanoate (2,3-dihydroxyisovalerate) into 2-oxo-3-methylbutanoate (2-oxoisovalerate), the penultimate precursor to L-isoleucine and L-valine, respectively. The protein is Dihydroxy-acid dehydratase of Shewanella woodyi (strain ATCC 51908 / MS32).